The chain runs to 134 residues: Large ribosomal subunit protein eL14y (134 aa).

Belongs to the eukaryotic ribosomal protein eL14 family.

This is Large ribosomal subunit protein eL14y (RPL14B) from Arabidopsis thaliana (Mouse-ear cress).